The sequence spans 406 residues: Serine/threonine transporter SstT (406 aa).

9 helical membrane-spanning segments follow: residues I11–M31, F45–I65, V79–F99, A141–L161, F185–T205, L216–V236, M298–V318, V330–I350, and F357–V377.

It belongs to the dicarboxylate/amino acid:cation symporter (DAACS) (TC 2.A.23) family.

The protein localises to the cell inner membrane. It carries out the reaction L-serine(in) + Na(+)(in) = L-serine(out) + Na(+)(out). The catalysed reaction is L-threonine(in) + Na(+)(in) = L-threonine(out) + Na(+)(out). Functionally, involved in the import of serine and threonine into the cell, with the concomitant import of sodium (symport system). The sequence is that of Serine/threonine transporter SstT from Psychrobacter sp. (strain PRwf-1).